The following is a 290-amino-acid chain: Potassium-transporting ATPase subunit beta (290 aa).

The Cytoplasmic segment spans residues 1 to 36; the sequence is MAALQEKKSCSQRMEEFQRYCWNPDTGQMLGRTLSR. A helical; Signal-anchor for type II membrane protein membrane pass occupies residues 37-57; it reads WVWISLYYVAFYVVMTGIFAL. Residues 58–290 are Extracellular-facing; it reads CIYTLMCTLD…KVEFKLTIQQ (233 aa). N-linked (GlcNAc...) asparagine glycosylation is found at N99, N103, N130, N146, and N161. An intrachain disulfide couples C131 to C152. A disulfide bond links C162 and C178. 2 N-linked (GlcNAc...) asparagine glycosylation sites follow: N193 and N221. Positions 194–290 are immunoglobulin-like; that stretch reads STAPRADCTF…KVEFKLTIQQ (97 aa). A disulfide bridge connects residues C201 and C262.

This sequence belongs to the X(+)/potassium ATPases subunit beta family. In terms of assembly, the ATPase pump is composed of two subunits: alpha (catalytic) and beta (regulatory). Interacts with alpha subunit ATP12A; this interaction is required for the formation of a functionally active pump and targeting at the plasma membrane. Interacts (via N-terminus) with alpha subunit ATP4A (via the P-domain). N-glycosylation is necessary for assembly and functional expression of the pump at the plasma membrane.

The protein localises to the apical cell membrane. The protein resides in the cell membrane. Its function is as follows. The beta subunit of the gastric H(+)/K(+) ATPase pump which transports H(+) ions in exchange for K(+) ions across the apical membrane of parietal cells. Plays a structural and regulatory role in the assembly and membrane targeting of a functionally active pump. Within a transport cycle, the transfer of a H(+) ion across the membrane is coupled to ATP hydrolysis and is associated with a transient phosphorylation of the alpha subunit that shifts the pump conformation from inward-facing (E1) to outward-facing state (E2). Interacts with the phosphorylation domain of the alpha subunit and functions as a ratchet, stabilizing the lumenal-open E2 conformation and preventing the reverse reaction of the transport cycle. In Canis lupus familiaris (Dog), this protein is Potassium-transporting ATPase subunit beta (ATP4B).